Reading from the N-terminus, the 247-residue chain is Capsid protein (247 aa).

Residues 1–40 (MWGTSNCACAKFQIRRRYARPYRRRHIRRYRRRRRHFRRR) form a DNA-binding region. The segment at 15–44 (RRRYARPYRRRHIRRYRRRRRHFRRRRFTT) is nuclear localization signals.

This sequence belongs to the circoviridae capsid protein family. As to quaternary structure, homomultimer. Assembles in the nucleus, presumably in an immature form, then migrates to the cytoplasm once assembled as mature virion. Interacts with Rep; this interaction relocates Rep into the nucleus.

The protein resides in the host nucleus. It is found in the virion. Functionally, self-assembles to form the virion icosahedral capsid with a T=1 symmetry. This very small capsid (17 - 22 nm in diameter) allows the virus to be very stable in the environment and resistant to some disinfectants, including detergents. Essential for the initial attachment to heparan sulfate moieties and chondroitin sulfate B of the host cell surface proteoglycans. After attachment, the virus is endocytosed and traffics to the nucleus. The capsid protein binds and transports the viral genome and Rep across the nuclear envelope. The chain is Capsid protein (Cap) from Beak and feather disease virus (BFDV).